Consider the following 391-residue polypeptide: MATFAELVLSTSRCTCPCRSFTRKPLIRPPLSGLRLPGDTKPLFRSGLGRISVSRRFLTAVARAESDQLGDDDHSKGIDRIHNLQNVEDKQKKASQLKKRVIFGIGIGLPVGCVVLAGGWVFTVALASSVFIGSREYFELVRSRGIAKGMTPPPRYVSRVCSVICALMPILTLYFGNIDILVTSAAFVVAIALLVQRGSPRFAQLSSTMFGLFYCGYLPSFWVKLRCGLAAPALNTGIGRTWPILLGGQAHWTVGLVATLISFSGVIATDTFAFLGGKTFGRTPLTSISPKKTWEGTIVGLVGCIAITILLSKYLSWPQSLFSSVAFGFLNFFGSVFGDLTESMIKRDAGVKDSGSLIPGHGGILDRVDSYIFTGALAYSFIKTSLKLYGV.

A chloroplast-targeting transit peptide spans 1-61 (MATFAELVLS…SVSRRFLTAV (61 aa)). 6 helical membrane passes run 102-122 (IFGI…GWVF), 175-195 (FGNI…ALLV), 202-222 (FAQL…PSFW), 254-274 (VGLV…TFAF), 298-318 (IVGL…LSWP), and 321-341 (LFSS…GDLT).

This sequence belongs to the CDS family. Mg(2+) is required as a cofactor.

Its subcellular location is the plastid. It localises to the chloroplast membrane. It carries out the reaction a 1,2-diacyl-sn-glycero-3-phosphate + CTP + H(+) = a CDP-1,2-diacyl-sn-glycerol + diphosphate. Its pathway is phospholipid metabolism; CDP-diacylglycerol biosynthesis; CDP-diacylglycerol from sn-glycerol 3-phosphate: step 3/3. Its activity is regulated as follows. Highest activities is obtained at about 30 mM CTP and 2 mM phosphatidic acid (PA). May be involved in the synthesis of minor phospholipids and in modulation of IP3-mediated signal transduction. Promotes the biosynthesis of plastidial phosphatidylglycerol (PG) which is required for structure and function of thylakoid membranes and, hence, for photoautotrophic growth. This chain is Phosphatidate cytidylyltransferase 4, chloroplastic, found in Arabidopsis thaliana (Mouse-ear cress).